The following is a 533-amino-acid chain: Flavin-dependent halogenase armH4 (533 aa).

FAD is bound by residues glycine 16, alanine 19, and glutamate 49. Chloride contacts are provided by serine 337 and glycine 338. Valine 339 serves as a coordination point for FAD.

Belongs to the flavin-dependent halogenase family.

It carries out the reaction melleolide F + FADH2 + chloride + O2 = 6'-chloromelleolide F + FAD + 2 H2O + H(+). The enzyme catalyses melleolide F + bromide + FADH2 + O2 = 6'-bromomelleolide F + FAD + 2 H2O. Flavin-dependent halogenase involved in the biosynthesis of melleolides, a range of antifungal and phytotoxic polyketide derivatives composed of an orsellinic acid (OA) moiety esterified to various sesquiterpene alcohols. The halogenase catalyzes the transfer of a single chlorine atom to the melleolide backbone, resulting in a 6'-chloromelleolide product. The enzyme acts on free substrate and does not depend on carrier-protein-dependent acceptor molecules. Can also catalyze the transfer of a single bromine atom to the melleolide backbone in vitro. This chain is Flavin-dependent halogenase armH4, found in Armillaria mellea (Honey mushroom).